Consider the following 510-residue polypeptide: Glutamyl-tRNA(Gln) amidotransferase subunit A (510 aa).

Residues Lys82 and Ser157 each act as charge relay system in the active site. Ser181 serves as the catalytic Acyl-ester intermediate.

Belongs to the amidase family. GatA subfamily. In terms of assembly, heterotrimer of A, B and C subunits.

It catalyses the reaction L-glutamyl-tRNA(Gln) + L-glutamine + ATP + H2O = L-glutaminyl-tRNA(Gln) + L-glutamate + ADP + phosphate + H(+). Allows the formation of correctly charged Gln-tRNA(Gln) through the transamidation of misacylated Glu-tRNA(Gln) in organisms which lack glutaminyl-tRNA synthetase. The reaction takes place in the presence of glutamine and ATP through an activated gamma-phospho-Glu-tRNA(Gln). The chain is Glutamyl-tRNA(Gln) amidotransferase subunit A from Bordetella avium (strain 197N).